Here is a 198-residue protein sequence, read N- to C-terminus: Coagulation factor XIII A chain (198 aa).

The segment at 1-36 (MSESSGTAFGGRRAIPPNTSNAAENDPPTVELQGLV) is disordered. At Ser-2 the chain carries N-acetylserine. Residues 2–38 (SESSGTAFGGRRAIPPNTSNAAENDPPTVELQGLVPR) constitute a propeptide, activation peptide.

The protein belongs to the transglutaminase superfamily. Transglutaminase family. As to quaternary structure, tetramer of two A chains (F13A1) and two B (F13B) chains. The cofactor is Ca(2+). In terms of processing, the activation peptide is released by thrombin.

Its subcellular location is the cytoplasm. It localises to the secreted. It catalyses the reaction L-glutaminyl-[protein] + L-lysyl-[protein] = [protein]-L-lysyl-N(6)-5-L-glutamyl-[protein] + NH4(+). Functionally, factor XIII is activated by thrombin and calcium ion to a transglutaminase that catalyzes the formation of gamma-glutamyl-epsilon-lysine cross-links between fibrin chains, thus stabilizing the fibrin clot. Also cross-link alpha-2-plasmin inhibitor, or fibronectin, to the alpha chains of fibrin. The polypeptide is Coagulation factor XIII A chain (F13A1) (Bos taurus (Bovine)).